An 87-amino-acid polypeptide reads, in one-letter code: Large ribosomal subunit protein bL27 (87 aa).

Residues methionine 1–glycine 22 form a disordered region.

This sequence belongs to the bacterial ribosomal protein bL27 family.

This Nitratidesulfovibrio vulgaris (strain DP4) (Desulfovibrio vulgaris) protein is Large ribosomal subunit protein bL27.